The sequence spans 919 residues: Calcium-transporting ATPase type 2C member 1 (919 aa).

Residues 1-70 (MKVARFQKIP…NEFDISEDEP (70 aa)) are Cytoplasmic-facing. The helical transmembrane segment at 71-91 (LWKKYISQFKNPLIMLLLASA) threads the bilayer. The Lumenal portion of the chain corresponds to 92–104 (VISVLMHQFDDAV). A helical membrane pass occupies residues 105 to 123 (SITVAILIVVTVAFVQEYR). Topologically, residues 124 to 262 (SEKSLEELSK…APKTPLQKSM (139 aa)) are cytoplasmic. A helical membrane pass occupies residues 263–282 (DLLGKQLSFYSFGIIGIIML). Over 283 to 294 (VGWLLGKDILEM) the chain is Lumenal. The chain crosses the membrane as a helical span at residues 295–312 (FTISVSLAVAAIPEGLPI). Ca(2+) is bound by residues Val303, Ala304, Ile306, and Glu308. Residues 313-699 (VVTVTLALGV…EEGKGIYNNI (387 aa)) are Cytoplasmic-facing. Residue Asp350 is the 4-aspartylphosphate intermediate of the active site. Mg(2+) is bound by residues Asp644 and Asp648. A helical membrane pass occupies residues 700 to 719 (KNFVRFQLSTSIAALTLISL). Residues 720-729 (ATLMNFPNPL) lie on the Lumenal side of the membrane. Residues 730–750 (NAMQILWINIIMDGPPAQSLG) traverse the membrane as a helical segment. 2 residues coordinate Ca(2+): Asn738 and Asp742. Residues 751–770 (VEPVDKDVIRKPPRNWKDSI) lie on the Cytoplasmic side of the membrane. Residues 771–793 (LTKNLILKILVSSIIIVCGTLFV) traverse the membrane as a helical segment. The Lumenal segment spans residues 794-808 (FWRELRDNVITPRDT). A helical membrane pass occupies residues 809–828 (TMTFTCFVFFDMFNALSSRS). The Cytoplasmic segment spans residues 829-841 (QTKSVFEIGLCSN). Residues 842 to 860 (RMFCYAVLGSIMGQLLVIY) traverse the membrane as a helical segment. Residues 861–875 (FPPLQKVFQTESLSI) are Lumenal-facing. The helical transmembrane segment at 876–896 (LDLLFLLGLTSSVCIVAEIIK) threads the bilayer. Topologically, residues 897 to 919 (KVERSREKIQKHVSSTSSSFLEV) are cytoplasmic.

The protein belongs to the cation transport ATPase (P-type) (TC 3.A.3) family. Type IIA subfamily. In terms of assembly, monomer. Homodimer. In terms of tissue distribution, found in most tissues except colon, thymus, spleen and leukocytes. Expressed in keratinocytes (at protein level).

The protein localises to the golgi apparatus. Its subcellular location is the trans-Golgi network membrane. It localises to the golgi stack membrane. The catalysed reaction is Ca(2+)(in) + ATP + H2O = Ca(2+)(out) + ADP + phosphate + H(+). The enzyme catalyses Mn(2+)(in) + ATP + H2O = Mn(2+)(out) + ADP + phosphate + H(+). In terms of biological role, ATP-driven pump that supplies the Golgi apparatus with Ca(2+) and Mn(2+) ions, both essential cofactors for processing and trafficking of newly synthesized proteins in the secretory pathway. Within a catalytic cycle, acquires Ca(2+) or Mn(2+) ions on the cytoplasmic side of the membrane and delivers them to the lumenal side. The transfer of ions across the membrane is coupled to ATP hydrolysis and is associated with a transient phosphorylation that shifts the pump conformation from inward-facing to outward-facing state. Plays a primary role in the maintenance of Ca(2+) homeostasis in the trans-Golgi compartment with a functional impact on Golgi and post-Golgi protein sorting as well as a structural impact on cisternae morphology. Responsible for loading the Golgi stores with Ca(2+) ions in keratinocytes, contributing to keratinocyte differentiation and epidermis integrity. Participates in Ca(2+) and Mn(2+) ions uptake into the Golgi store of hippocampal neurons and regulates protein trafficking required for neural polarity. May also play a role in the maintenance of Ca(2+) and Mn(2+) homeostasis and signaling in the cytosol while preventing cytotoxicity. This is Calcium-transporting ATPase type 2C member 1 from Homo sapiens (Human).